We begin with the raw amino-acid sequence, 163 residues long: Protein-export protein SecB (163 aa).

It belongs to the SecB family. As to quaternary structure, homotetramer, a dimer of dimers. One homotetramer interacts with 1 SecA dimer.

Its subcellular location is the cytoplasm. Its function is as follows. One of the proteins required for the normal export of preproteins out of the cell cytoplasm. It is a molecular chaperone that binds to a subset of precursor proteins, maintaining them in a translocation-competent state. It also specifically binds to its receptor SecA. The polypeptide is Protein-export protein SecB (Shewanella woodyi (strain ATCC 51908 / MS32)).